The following is a 118-amino-acid chain: MATATTKAKATERIKMRIRKGDTVQVIAGKDKGKTGAVLRTLPNENRVVVEGVNMRTRHEKPTQEGETGRIVTEEASLHASNVMLYSTDKKVASRVEIVVEKDGTKKRRLKKTGEVLD.

Belongs to the universal ribosomal protein uL24 family. In terms of assembly, part of the 50S ribosomal subunit.

Its function is as follows. One of two assembly initiator proteins, it binds directly to the 5'-end of the 23S rRNA, where it nucleates assembly of the 50S subunit. One of the proteins that surrounds the polypeptide exit tunnel on the outside of the subunit. The chain is Large ribosomal subunit protein uL24 from Synechococcus sp. (strain CC9605).